The primary structure comprises 263 residues: Antigen 10-3 (263 aa).

Residues 1–21 (MNIYLIGILCIVGLIISQGST) form the signal peptide. Residues 70-207 (GNKKDKQPTQ…QINDGTSDKP (138 aa)) are disordered. Residues 78 to 90 (TQKTTPKPTTPKQ) show a composition bias toward low complexity. Repeat copies occupy residues 81–107 (TTPK…TIKR), 108–134 (TTPK…TIKR), 135–161 (TTPK…TIKR), 162–188 (TTPK…TIKR), and 189–206 (TTPK…TSDK). Residues 81-189 (TTPKPTTPKQ…TSDTHTIKRT (109 aa)) are 5 X 27 AA tandem repeats. 4 stretches are compositionally biased toward basic and acidic residues: residues 95-104 (TSDKTSDTHT), 122-131 (TSDKTSDTHT), 149-158 (TSDKTSDTHT), and 176-185 (TSDKTSDTHT).

The protein is Antigen 10-3 of Schistosoma mansoni (Blood fluke).